The primary structure comprises 104 residues: MKFRPLHDRVVVKRIDAEEKTAGGIIIPDTAKEKPSQGEVIAVGPGGHDDSGKLIPIDIEVGDRVLFGKWSGTEVKIDGQDLLIMKESDVMGVLTDVFSKKKAA.

It belongs to the GroES chaperonin family. Heptamer of 7 subunits arranged in a ring. Interacts with the chaperonin GroEL.

It is found in the cytoplasm. Together with the chaperonin GroEL, plays an essential role in assisting protein folding. The GroEL-GroES system forms a nano-cage that allows encapsulation of the non-native substrate proteins and provides a physical environment optimized to promote and accelerate protein folding. GroES binds to the apical surface of the GroEL ring, thereby capping the opening of the GroEL channel. The protein is Co-chaperonin GroES 3 of Bradyrhizobium diazoefficiens (strain JCM 10833 / BCRC 13528 / IAM 13628 / NBRC 14792 / USDA 110).